We begin with the raw amino-acid sequence, 223 residues long: Cell division protein SepF (223 aa).

A disordered region spans residues 19 to 81 (YDDEYYDDRG…YPPPGGYRGG (63 aa)). Residues 36–69 (PRFEDDYGRYEGRDFEDPRRDPRAGMRADLRGEP) are compositionally biased toward basic and acidic residues.

The protein belongs to the SepF family. As to quaternary structure, homodimer. Interacts with FtsZ.

Its subcellular location is the cytoplasm. In terms of biological role, cell division protein that is part of the divisome complex and is recruited early to the Z-ring. Probably stimulates Z-ring formation, perhaps through the cross-linking of FtsZ protofilaments. Its function overlaps with FtsA. This is Cell division protein SepF from Mycobacterium ulcerans (strain Agy99).